The chain runs to 429 residues: Adenylosuccinate synthetase (429 aa).

GTP contacts are provided by residues Gly12–Lys18 and Gly40–Thr42. The active-site Proton acceptor is Asp13. Positions 13 and 40 each coordinate Mg(2+). IMP is bound by residues Asp13–Lys16, Asn38–His41, Thr129, Arg143, Gln223, Thr238, and Arg302. Catalysis depends on His41, which acts as the Proton donor. Residue Val298 to Arg304 participates in substrate binding. Residues Arg304, Lys330–Asp332, and Ser412–Ser414 contribute to the GTP site.

The protein belongs to the adenylosuccinate synthetase family. As to quaternary structure, homodimer. Requires Mg(2+) as cofactor.

Its subcellular location is the cytoplasm. The catalysed reaction is IMP + L-aspartate + GTP = N(6)-(1,2-dicarboxyethyl)-AMP + GDP + phosphate + 2 H(+). It functions in the pathway purine metabolism; AMP biosynthesis via de novo pathway; AMP from IMP: step 1/2. Its function is as follows. Plays an important role in the de novo pathway of purine nucleotide biosynthesis. Catalyzes the first committed step in the biosynthesis of AMP from IMP. The sequence is that of Adenylosuccinate synthetase from Brucella anthropi (strain ATCC 49188 / DSM 6882 / CCUG 24695 / JCM 21032 / LMG 3331 / NBRC 15819 / NCTC 12168 / Alc 37) (Ochrobactrum anthropi).